Reading from the N-terminus, the 325-residue chain is MKIFDYEDIQLIPNKCIVESRSECDTTIQFGPKKFKLPVVPANMQTVMNEKLAKWFAENDYFYIMHRFDEEARIPFIKHMQNSGLFASISVGVKKAEFDFIEKLAQEKLIPEYITIDIAHGHSDSVINMIKHIKNHIPDSFVIAGNVGTPEGVRELENAGADATKVGIGPGRVCITKIKTGFGTGGWQLAALNICSKAARKPLIADGGIRTHGDIAKSIRFGASMVMIGSLFAAHEESPGETVELDGKQYKEYFGSASEFQKGEHKNVEGKKMFVEHKGSLMDTLKEMQQDLQSSISYAGGKDLKSLRTVDYVIVRNSIFNGDRD.

Cys174 acts as the Thioimidate intermediate in catalysis. NADP(+) is bound at residue 203–226 (LIADGGIRTHGDIAKSIRFGASMV).

This sequence belongs to the IMPDH/GMPR family. GuaC type 2 subfamily.

The enzyme catalyses IMP + NH4(+) + NADP(+) = GMP + NADPH + 2 H(+). Functionally, catalyzes the irreversible NADPH-dependent deamination of GMP to IMP. It functions in the conversion of nucleobase, nucleoside and nucleotide derivatives of G to A nucleotides, and in maintaining the intracellular balance of A and G nucleotides. This chain is GMP reductase, found in Staphylococcus aureus (strain JH9).